We begin with the raw amino-acid sequence, 700 residues long: Translation initiation factor IF-2 (700 aa).

A disordered region spans residues 58-85; sequence KKEVKKQKEPSKEKGKSSEQVKVKEKSK. The region spanning 191–365 is the tr-type G domain; that stretch reads PRPPVVTIMG…EMQEIRCIPD (175 aa). The tract at residues 200-207 is G1; sequence GHVDHGKT. 200-207 serves as a coordination point for GTP; sequence GHVDHGKT. Positions 225 to 229 are G2; the sequence is GITQS. Residues 246 to 249 are G3; the sequence is DTPG. GTP is bound by residues 246-250 and 300-303; these read DTPGH and NKID. The segment at 300-303 is G4; sequence NKID. Positions 337–339 are G5; the sequence is SAK.

This sequence belongs to the TRAFAC class translation factor GTPase superfamily. Classic translation factor GTPase family. IF-2 subfamily.

It is found in the cytoplasm. Its function is as follows. One of the essential components for the initiation of protein synthesis. Protects formylmethionyl-tRNA from spontaneous hydrolysis and promotes its binding to the 30S ribosomal subunits. Also involved in the hydrolysis of GTP during the formation of the 70S ribosomal complex. The protein is Translation initiation factor IF-2 of Petrotoga mobilis (strain DSM 10674 / SJ95).